A 744-amino-acid polypeptide reads, in one-letter code: Adenosylcobalamin-dependent ribonucleoside-triphosphate reductase (744 aa).

A disulfide bond links Cys-120 and Cys-424. The effector region-1 stretch occupies residues 148 to 159 (SMPFSFLFDQLM). The effector region-2 stretch occupies residues 169-318 (VDENINQIPK…ICNLIGKTVV (150 aa)). Catalysis depends on residues Cys-413 and Glu-415. The adenosylcobalamin-binding-1 stretch occupies residues 570 to 631 (FHYSGYLIQR…SDNFASAGTV (62 aa)). The adenosylcobalamin-binding-2 stretch occupies residues 690 to 729 (LKQAPKEPISKEKYEKADNHITGNVEIVFEQTNEDQKGLE).

Belongs to the class II ribonucleoside-triphosphate reductase family. Monomer. Requires adenosylcob(III)alamin as cofactor.

It catalyses the reaction a 2'-deoxyribonucleoside 5'-triphosphate + [thioredoxin]-disulfide + H2O = a ribonucleoside 5'-triphosphate + [thioredoxin]-dithiol. With respect to regulation, allosterically regulated by ATP and dNTP. The sequence is that of Adenosylcobalamin-dependent ribonucleoside-triphosphate reductase (rtpR) from Lactobacillus gasseri (strain ATCC 33323 / DSM 20243 / BCRC 14619 / CIP 102991 / JCM 1131 / KCTC 3163 / NCIMB 11718 / NCTC 13722 / AM63).